Here is a 231-residue protein sequence, read N- to C-terminus: MGQKTHPIGFRLGVIKDWPSKWYPPKKDYAKLLHEDLKIKNYIKKRYKVAGVSKVEIERIVDKVRIKIHTAKPAIVIGRRGQEVDRLKKTIERMLPGKEISISVLEVKVPELDAQLVAEDIALQIERRVSHRRAMKRAIDNALKAGQKGVKVQVKGRIGGAARARKEWFLVGRMPLQTLRADIDYGFATAYTKYGILSVKVWIYKGDVLKGGKEEILKKIEEEIKQAAKEG.

In terms of domain architecture, KH type-2 spans 39–108; it reads IKNYIKKRYK…EISISVLEVK (70 aa).

This sequence belongs to the universal ribosomal protein uS3 family. Part of the 30S ribosomal subunit. Forms a tight complex with proteins S10 and S14.

Binds the lower part of the 30S subunit head. Binds mRNA in the 70S ribosome, positioning it for translation. This Aquifex pyrophilus protein is Small ribosomal subunit protein uS3.